Here is a 294-residue protein sequence, read N- to C-terminus: MFIVKNLNFNFLNVISNFLPNKMLENVFIELYERGILLFLDVDSYCKNSDDADLNILKGRKEFLKYFDEPLEKGYVFTFNTDIHKLYKEIEEESCAVISYGYESDTDDKADDVGRNFVEILNKNGYITDWTEEVKDSKTIKIVIDENDIPNFKLNESPYLLNLTNDDLFENKNPLIQLIEDEPFPTTKNHNNDKRETNDKDDQQLKLNKMKEIEEKTIAFIDKNSLTKSQIEEYCTQQIINLDAIDTTDEIVKCRRKETIQNLQQVSLPTLKCSKCLKLYKQKKSYEKHIEKCN.

The segment at Asp-181–Gln-204 is disordered. A compositionally biased stretch (basic and acidic residues) spans His-190–Gln-204.

It belongs to the IIV-6 391R family.

This is an uncharacterized protein from Acheta domesticus (House cricket).